An 88-amino-acid chain; its full sequence is UPF0297 protein RBAM_024500 (88 aa).

The protein belongs to the UPF0297 family.

This chain is UPF0297 protein RBAM_024500, found in Bacillus velezensis (strain DSM 23117 / BGSC 10A6 / LMG 26770 / FZB42) (Bacillus amyloliquefaciens subsp. plantarum).